The sequence spans 222 residues: Capsular polysaccharide type 5 biosynthesis protein cap5A (222 aa).

2 helical membrane passes run 20–40 (ILII…FFVL) and 172–192 (VVNL…YIFF).

This sequence belongs to the CpsC/CapA family.

The protein localises to the cell membrane. In terms of biological role, required for the biosynthesis of type 5 capsular polysaccharide (Cap5/CP5). Might act as the chain-length regulator. The polypeptide is Capsular polysaccharide type 5 biosynthesis protein cap5A (cap5A) (Staphylococcus aureus (strain Newman)).